A 386-amino-acid chain; its full sequence is Alanine racemase (386 aa).

Lysine 38 functions as the Proton acceptor; specific for D-alanine in the catalytic mechanism. N6-(pyridoxal phosphate)lysine is present on lysine 38. Arginine 136 lines the substrate pocket. The Proton acceptor; specific for L-alanine role is filled by tyrosine 267. Methionine 315 lines the substrate pocket.

This sequence belongs to the alanine racemase family. It depends on pyridoxal 5'-phosphate as a cofactor.

The enzyme catalyses L-alanine = D-alanine. It participates in amino-acid biosynthesis; D-alanine biosynthesis; D-alanine from L-alanine: step 1/1. Its function is as follows. Catalyzes the interconversion of L-alanine and D-alanine. May also act on other amino acids. This Clostridium perfringens (strain SM101 / Type A) protein is Alanine racemase (alr).